The sequence spans 321 residues: Aspartate carbamoyltransferase catalytic subunit (321 aa).

Positions 60 and 61 each coordinate carbamoyl phosphate. Lys88 serves as a coordination point for L-aspartate. The carbamoyl phosphate site is built by Arg110, His138, and Gln141. L-aspartate-binding residues include Arg171 and Arg225. Carbamoyl phosphate-binding residues include Gly266 and Pro267.

The protein belongs to the aspartate/ornithine carbamoyltransferase superfamily. ATCase family. Heterododecamer (2C3:3R2) of six catalytic PyrB chains organized as two trimers (C3), and six regulatory PyrI chains organized as three dimers (R2).

The catalysed reaction is carbamoyl phosphate + L-aspartate = N-carbamoyl-L-aspartate + phosphate + H(+). Its pathway is pyrimidine metabolism; UMP biosynthesis via de novo pathway; (S)-dihydroorotate from bicarbonate: step 2/3. Its function is as follows. Catalyzes the condensation of carbamoyl phosphate and aspartate to form carbamoyl aspartate and inorganic phosphate, the committed step in the de novo pyrimidine nucleotide biosynthesis pathway. The chain is Aspartate carbamoyltransferase catalytic subunit from Sorangium cellulosum (strain So ce56) (Polyangium cellulosum (strain So ce56)).